We begin with the raw amino-acid sequence, 401 residues long: Multidrug resistance protein MdtH (401 aa).

Helical transmembrane passes span 13–33, 34–54, 99–116, 139–159, 165–185, 214–234, 243–263, 277–297, 299–319, 340–360, and 368–388; these read YFLLFDNLLVVLGFFVVFPLI, SIRFVDQLGWAALVVGLALGL, PWILWLACALSGLGGTLF, LLMMQDSAGAVIGALIGSWLL, FVCWTGAAIFVLAAGWNAWLL, VLTLTGYYMLAVQVMLMLPIV, AAVKWMYAIEAALSLTLLYPL, LMAGLLIMTLSLFPIGMITHL, TLFMFICFFYMGSILAEPARE, LGLALGGALGYTGGGWMYDTG, and LPWFLLGIIGLITLAGLYWQF.

This sequence belongs to the major facilitator superfamily. DHA1 family. MdtH (TC 2.A.1.2.21) subfamily.

The protein resides in the cell inner membrane. The protein is Multidrug resistance protein MdtH of Yersinia pseudotuberculosis serotype O:1b (strain IP 31758).